The chain runs to 242 residues: Large ribosomal subunit protein uL1 (242 aa).

The protein belongs to the universal ribosomal protein uL1 family. In terms of assembly, part of the 50S ribosomal subunit.

Its function is as follows. Binds directly to 23S rRNA. The L1 stalk is quite mobile in the ribosome, and is involved in E site tRNA release. Protein L1 is also a translational repressor protein, it controls the translation of the L11 operon by binding to its mRNA. The protein is Large ribosomal subunit protein uL1 of Wigglesworthia glossinidia brevipalpis.